Here is a 515-residue protein sequence, read N- to C-terminus: Histidine ammonia-lyase (515 aa).

A cross-link (5-imidazolinone (Ala-Gly)) is located at residues 148–150 (ASG). Serine 149 carries the 2,3-didehydroalanine (Ser) modification.

The protein belongs to the PAL/histidase family. Contains an active site 4-methylidene-imidazol-5-one (MIO), which is formed autocatalytically by cyclization and dehydration of residues Ala-Ser-Gly.

It localises to the cytoplasm. The enzyme catalyses L-histidine = trans-urocanate + NH4(+). The protein operates within amino-acid degradation; L-histidine degradation into L-glutamate; N-formimidoyl-L-glutamate from L-histidine: step 1/3. The polypeptide is Histidine ammonia-lyase (Pseudomonas syringae pv. tomato (strain ATCC BAA-871 / DC3000)).